The sequence spans 238 residues: 2-C-methyl-D-erythritol 4-phosphate cytidylyltransferase (238 aa).

Belongs to the IspD/TarI cytidylyltransferase family. IspD subfamily.

It carries out the reaction 2-C-methyl-D-erythritol 4-phosphate + CTP + H(+) = 4-CDP-2-C-methyl-D-erythritol + diphosphate. Its pathway is isoprenoid biosynthesis; isopentenyl diphosphate biosynthesis via DXP pathway; isopentenyl diphosphate from 1-deoxy-D-xylulose 5-phosphate: step 2/6. Its function is as follows. Catalyzes the formation of 4-diphosphocytidyl-2-C-methyl-D-erythritol from CTP and 2-C-methyl-D-erythritol 4-phosphate (MEP). The protein is 2-C-methyl-D-erythritol 4-phosphate cytidylyltransferase of Acinetobacter baumannii (strain ACICU).